The sequence spans 231 residues: Cytidylate kinase (231 aa).

18 to 26 (GPSGTGKSS) is a binding site for ATP.

It belongs to the cytidylate kinase family. Type 1 subfamily.

The protein localises to the cytoplasm. It catalyses the reaction CMP + ATP = CDP + ADP. It carries out the reaction dCMP + ATP = dCDP + ADP. This chain is Cytidylate kinase, found in Streptomyces avermitilis (strain ATCC 31267 / DSM 46492 / JCM 5070 / NBRC 14893 / NCIMB 12804 / NRRL 8165 / MA-4680).